A 362-amino-acid polypeptide reads, in one-letter code: 3-dehydroquinate synthase (362 aa).

NAD(+) contacts are provided by residues 70 to 75 (DGEKYK), 104 to 108 (GVIGD), 128 to 129 (TT), Lys141, Lys150, and 168 to 171 (TLNT). Zn(2+) contacts are provided by Glu183, His246, and His263.

Belongs to the sugar phosphate cyclases superfamily. Dehydroquinate synthase family. Requires NAD(+) as cofactor. The cofactor is Co(2+). Zn(2+) serves as cofactor.

It localises to the cytoplasm. It carries out the reaction 7-phospho-2-dehydro-3-deoxy-D-arabino-heptonate = 3-dehydroquinate + phosphate. Its pathway is metabolic intermediate biosynthesis; chorismate biosynthesis; chorismate from D-erythrose 4-phosphate and phosphoenolpyruvate: step 2/7. In terms of biological role, catalyzes the conversion of 3-deoxy-D-arabino-heptulosonate 7-phosphate (DAHP) to dehydroquinate (DHQ). The protein is 3-dehydroquinate synthase of Haemophilus influenzae (strain ATCC 51907 / DSM 11121 / KW20 / Rd).